Here is a 175-residue protein sequence, read N- to C-terminus: Endoribonuclease YbeY (175 aa).

His-129, His-133, and His-139 together coordinate Zn(2+).

It belongs to the endoribonuclease YbeY family. It depends on Zn(2+) as a cofactor.

The protein resides in the cytoplasm. Functionally, single strand-specific metallo-endoribonuclease involved in late-stage 70S ribosome quality control and in maturation of the 3' terminus of the 16S rRNA. This is Endoribonuclease YbeY from Lactobacillus johnsonii (strain CNCM I-12250 / La1 / NCC 533).